The sequence spans 463 residues: Glutamate--tRNA ligase (463 aa).

The short motif at 9–19 (PSPTGYLHVGG) is the 'HIGH' region element. Positions 115 to 129 (AGEKPRYDGTWRPEA) are enriched in basic and acidic residues. The interval 115–136 (AGEKPRYDGTWRPEAGKTLPAI) is disordered. A 'KMSKS' region motif is present at residues 241–245 (KLSKR). Lys-244 lines the ATP pocket.

This sequence belongs to the class-I aminoacyl-tRNA synthetase family. Glutamate--tRNA ligase type 1 subfamily. As to quaternary structure, monomer.

The protein localises to the cytoplasm. The enzyme catalyses tRNA(Glu) + L-glutamate + ATP = L-glutamyl-tRNA(Glu) + AMP + diphosphate. Catalyzes the attachment of glutamate to tRNA(Glu) in a two-step reaction: glutamate is first activated by ATP to form Glu-AMP and then transferred to the acceptor end of tRNA(Glu). This Janthinobacterium sp. (strain Marseille) (Minibacterium massiliensis) protein is Glutamate--tRNA ligase.